Consider the following 247-residue polypeptide: MTGAVSAAYWIAAVAFLVGLGITAALYAKLGESEDRGRLAALAVIPGFAGLAYAGMALGIGTVTVNGAELVGLRYVDWIVTTPLLVGFIGYVAGASRRAIAGVMLADALMIAFGAGAVVTGGTLKWVLFGVSSIFHVTLFAYLYVVFPRAVPDDPMQRGLFSLLKNHVGLLWLAYPFVWLMGPAGIGFTTGVGAALTYAFLDVLAKVPYVYFFYARRQAFTDVVSAATADREDATDAVGDGAPTAAD.

At M1–A4 the chain is on the extracellular side. A helical membrane pass occupies residues V5–L26. The Cytoplasmic portion of the chain corresponds to Y27–D35. The chain crosses the membrane as a helical span at residues R36–A57. Over L58–V71 the chain is Extracellular. Residues G72–A93 traverse the membrane as a helical segment. The Cytoplasmic segment spans residues G94–S96. Residues R97–V119 form a helical membrane-spanning segment. Topologically, residues T120–T123 are extracellular. The chain crosses the membrane as a helical span at residues L124–V151. Residues P152–D154 are Cytoplasmic-facing. Residues P155–G182 traverse the membrane as a helical segment. At P183 to T190 the chain is on the extracellular side. The chain crosses the membrane as a helical span at residues G191–V223. At K206 the chain carries N6-(retinylidene)lysine. The Cytoplasmic portion of the chain corresponds to V224 to D247.

It belongs to the archaeal/bacterial/fungal opsin family. As to quaternary structure, interacts with HTR-I.

The protein localises to the cell membrane. In terms of biological role, involved in the control of phototaxis. Mediates both photoattractant (in the orange light) and photophobic (in the near UV light) responses. The signal is then transmitted to the sensory rhodopsin I transducer (HTR-I). The protein is Sensory rhodopsin-1 (sop1) of Halobacterium sp. (strain SG1).